The sequence spans 38 residues: Large ribosomal subunit protein bL36 (38 aa).

It belongs to the bacterial ribosomal protein bL36 family.

The polypeptide is Large ribosomal subunit protein bL36 (Mycoplasma mobile (strain ATCC 43663 / 163K / NCTC 11711) (Mesomycoplasma mobile)).